Consider the following 362-residue polypeptide: Glucuronokinase 1 (362 aa).

126-136 (PRQTGLSGSSA) contributes to the ATP binding site. Aspartate 179 functions as the Proton acceptor in the catalytic mechanism.

The protein belongs to the GHMP kinase family. Mg(2+) is required as a cofactor. The cofactor is Mn(2+). It depends on Co(2+) as a cofactor. In terms of tissue distribution, highly expressed in pollen. Detected in seedlings, inflorescences, seeds, leaves and roots.

The enzyme catalyses D-glucuronate + ATP = 1-phospho-alpha-D-glucuronate + ADP + H(+). Functionally, sugar-1-kinase with a strict substrate specificity for D-glucuronic acid and ATP. Involved in the biosynthesis of UDP-glucuronic acid (UDP-GlcA), providing nucleotide sugars for cell-wall polymers. May be also involved in a salvage pathway for glucuronic acid. In Arabidopsis thaliana (Mouse-ear cress), this protein is Glucuronokinase 1 (GLCAK1).